The sequence spans 330 residues: Alpha/beta hydrolase domain-containing protein VTE7 (330 aa).

Positions 84-315 (VVLLHCFDSS…GHLPHVENPK (232 aa)) constitute an AB hydrolase-1 domain. The active-site Nucleophile is the Ser-157. Catalysis depends on charge relay system residues Asp-279 and His-307.

It belongs to the AB hydrolase superfamily.

It localises to the plastid. Its subcellular location is the chloroplast envelope. Hydrolase involved in tocopherol (vitamin E) biosynthesis. Releases prenyl alcohols from chlorophyll biosynthetic intermediates, which are then converted to the corresponding diphosphates for tocopherol biosynthesis. Provides most of the phytol from chlorophyll for tocopherol biosynthesis in seeds. In Arabidopsis thaliana (Mouse-ear cress), this protein is Alpha/beta hydrolase domain-containing protein VTE7.